Reading from the N-terminus, the 353-residue chain is Jasmonate-induced oxygenase 4 (353 aa).

The region spanning Val202–Pro302 is the Fe2OG dioxygenase domain. Arg207 contributes to the jasmonate binding site. 2-oxoglutarate is bound by residues Asn209 and Tyr211. Fe cation is bound by residues His226, Asp228, and His283. The 2-oxoglutarate site is built by Arg293 and Ser295. Jasmonate contacts are provided by Arg332 and Arg336.

It belongs to the iron/ascorbate-dependent oxidoreductase family. L-ascorbate is required as a cofactor. Fe(2+) serves as cofactor.

It catalyses the reaction jasmonate + 2-oxoglutarate + O2 = (1R,2R)-12-hydroxyjasmonate + succinate + CO2. In terms of biological role, 2-oxoglutarate-dependent dioxygenase involved in the oxidation of jasmonate (JA), a stress-induced phytohormone synthesized in response to attack by pathogens and herbivores, which triggers the activation of defense responses via the JA-mediated signaling pathway. Converts JA to 12-hydroxyjasmonate (12OH-JA), an inactive form of JA. Is specific to free JA, and cannot oxidize the bioactive form jasmonoyl-L-isoleucine (JA-Ile) or other JA-amino acid conjugates. Prevents over-accumulation of JA and indirectly its bioactive form JA-Ile under stress response. Acts as a negative regulator of JA-mediated defense signaling, by contributing to 12OH-JA accumulation, which represses JA defense responses upon infection by the fungal pathogen Botrytis cinerea. Acts as a negative regulator of JA-mediated defense responses upon infestation by the herbivorous caterpillar Mamestra brassicae. This is Jasmonate-induced oxygenase 4 from Arabidopsis thaliana (Mouse-ear cress).